Reading from the N-terminus, the 172-residue chain is uncharacterized protein (172 aa).

Residues 1–17 (MISLDKDENEIEHHNEE) show a composition bias toward basic and acidic residues. Residues 1-27 (MISLDKDENEIEHHNEENSLVEQETAP) form a disordered region. The chain crosses the membrane as a helical span at residues 129–151 (IVTVLIGIIVAIFVLVVIGIAAF).

The protein resides in the membrane. This is an uncharacterized protein from Bacillus subtilis (strain 168).